The sequence spans 285 residues: Putative alkaline ceramidase dcd3B (285 aa).

3 helical membrane-spanning segments follow: residues 34-54, 77-97, and 104-124; these read TFSSFIITAFGVYGIFLMMSA, VLFSYLSLAIVGVGSAFYHAT, and LFDEFPMMLTASMFVYCILTI. Residue Asn-131 is glycosylated (N-linked (GlcNAc...) asparagine). Transmembrane regions (helical) follow at residues 141–161, 166–186, 200–220, and 236–256; these read RFLPYILSLYVIVVAITITII, IILQSSFGLLIFSNVFLSYMY, PKKFLYLCIASMGIAYISWLT, and LHAVWHALTGLAGFYYIQFFI.

The protein belongs to the alkaline ceramidase family.

It localises to the membrane. The protein is Putative alkaline ceramidase dcd3B (dcd3B) of Dictyostelium discoideum (Social amoeba).